A 476-amino-acid chain; its full sequence is Lactate utilization protein B (476 aa).

2 4Fe-4S ferredoxin-type domains span residues 304-334 (GTEFQPVLQCIRCAACVNVCPVYRHIGGHSY) and 353-382 (YDDYKELPYASSLCAACTEACPVKIPLHEL). 7 residues coordinate [4Fe-4S] cluster: cysteine 313, cysteine 316, cysteine 319, cysteine 323, cysteine 366, cysteine 369, and cysteine 373. The segment at 440–476 (KGPGPLKAWTESREFPAPSKERFRDWFQTRQKGGNPS) is disordered. The segment covering 449–466 (TESREFPAPSKERFRDWF) has biased composition (basic and acidic residues). Over residues 467–476 (QTRQKGGNPS) the composition is skewed to polar residues.

This sequence belongs to the LutB/YkgF family.

In terms of biological role, is involved in L-lactate degradation and allows cells to grow with lactate as the sole carbon source. Has probably a role as an electron transporter during oxidation of L-lactate. In Geobacillus kaustophilus (strain HTA426), this protein is Lactate utilization protein B.